The primary structure comprises 146 residues: Putative trafficking protein particle complex subunit TRS31 (146 aa).

Belongs to the TRAPP small subunits family. BET3 subfamily. As to quaternary structure, part of the multisubunit TRAPP (transport protein particle) complex.

The protein localises to the golgi apparatus. The protein resides in the cis-Golgi network. Its subcellular location is the endoplasmic reticulum. Its function is as follows. May play a role in vesicular transport from endoplasmic reticulum to Golgi. This Encephalitozoon cuniculi (strain GB-M1) (Microsporidian parasite) protein is Putative trafficking protein particle complex subunit TRS31 (TRS31).